The following is a 264-amino-acid chain: S-adenosylmethionine decarboxylase proenzyme (264 aa).

S112 functions as the Schiff-base intermediate with substrate; via pyruvic acid in the catalytic mechanism. A Pyruvic acid (Ser); by autocatalysis modification is found at S112. Catalysis depends on H117, which acts as the Proton acceptor; for processing activity. C140 serves as the catalytic Proton donor; for catalytic activity.

Belongs to the prokaryotic AdoMetDC family. Type 2 subfamily. In terms of assembly, heterooctamer of four alpha and four beta chains arranged as a tetramer of alpha/beta heterodimers. Pyruvate serves as cofactor. In terms of processing, is synthesized initially as an inactive proenzyme. Formation of the active enzyme involves a self-maturation process in which the active site pyruvoyl group is generated from an internal serine residue via an autocatalytic post-translational modification. Two non-identical subunits are generated from the proenzyme in this reaction, and the pyruvate is formed at the N-terminus of the alpha chain, which is derived from the carboxyl end of the proenzyme. The post-translation cleavage follows an unusual pathway, termed non-hydrolytic serinolysis, in which the side chain hydroxyl group of the serine supplies its oxygen atom to form the C-terminus of the beta chain, while the remainder of the serine residue undergoes an oxidative deamination to produce ammonia and the pyruvoyl group blocking the N-terminus of the alpha chain.

The catalysed reaction is S-adenosyl-L-methionine + H(+) = S-adenosyl 3-(methylsulfanyl)propylamine + CO2. Its pathway is amine and polyamine biosynthesis; S-adenosylmethioninamine biosynthesis; S-adenosylmethioninamine from S-adenosyl-L-methionine: step 1/1. In terms of biological role, catalyzes the decarboxylation of S-adenosylmethionine to S-adenosylmethioninamine (dcAdoMet), the propylamine donor required for the synthesis of the polyamines spermine and spermidine from the diamine putrescine. The protein is S-adenosylmethionine decarboxylase proenzyme of Salmonella typhi.